Here is a 154-residue protein sequence, read N- to C-terminus: MGNCLKSPTSDDISLLHESQSDRASFGEGTEPDQEPPPPYQEQVPVPIYHPTPSQTRLATQLTEEEQIRIAQRIGLIQHLPKGVYDPGRDGSEKKIRECVICMMDFVYGDPIRFLPCMHIYHLDCIDDWLMRSFTCPSCMEPVDAALLSSYETN.

The segment covering 1–12 (MGNCLKSPTSDD) has biased composition (polar residues). The disordered stretch occupies residues 1–52 (MGNCLKSPTSDDISLLHESQSDRASFGEGTEPDQEPPPPYQEQVPVPIYHPT). Residue Gly2 is the site of N-myristoyl glycine attachment. The S-palmitoyl cysteine moiety is linked to residue Cys4. Residues Ser14 and Ser25 each carry the phosphoserine modification. Residues 37 to 40 (PPPY) carry the PPxY motif motif. The segment at 99–140 (CVICMMDFVYGDPIRFLPCMHIYHLDCIDDWLMRSFTCPSCM) adopts an RING-type zinc-finger fold. Residue Thr135 is modified to Phosphothreonine; by PKB/AKT1.

As to quaternary structure, interacts (when phosphorylated) with 14-3-3. Interacts with the E3 ubiquitin-ligases NEDD4, ITCH, SMURF2 and WWP1. Also interacts with the E2 ubiquitin-conjugating enzymes UBE2D1 and UBE2N, but neither with CDC34, nor with UBE2L3. Interacts with ZNF350, EPS15 and STAMBP. After TNF stimulation, interacts with TAX1BP1, TNFAIP3 and RIPK1; these interactions are transient and they are lost after 1 hour of stimulation with TNF. Interacts with GGA1. Ubiquitinated in the presence of ITCH, SMURF2 and UBE2D1, as well as WWP1. In terms of processing, phosphorylation by PKB/AKT1 may accelerate degradation by the proteasome. Post-translationally, acylation at both Gly-2 and Cys-4 is required for proper localization to the endosomes.

It is found in the early endosome. The protein localises to the recycling endosome. It localises to the cytoplasm. The protein resides in the nucleus. Its function is as follows. Essential component of a ubiquitin-editing protein complex, comprising also TNFAIP3, ITCH and TAX1BP1, that ensures the transient nature of inflammatory signaling pathways. Promotes the association of TNFAIP3 to RIPK1 after TNF stimulation. TNFAIP3 deubiquitinates 'Lys-63' polyubiquitin chains on RIPK1 and catalyzes the formation of 'Lys-48'-polyubiquitin chains. This leads to RIPK1 proteasomal degradation and consequently termination of the TNF- or LPS-mediated activation of NF-kappa-B. Recruits STAMBP to the E3 ubiquitin-ligase SMURF2 for ubiquitination, leading to its degradation by the 26S proteasome. The sequence is that of RING finger protein 11 (Rnf11) from Mus musculus (Mouse).